Consider the following 172-residue polypeptide: Adenine phosphoribosyltransferase (172 aa).

Belongs to the purine/pyrimidine phosphoribosyltransferase family. Homodimer.

It localises to the cytoplasm. The enzyme catalyses AMP + diphosphate = 5-phospho-alpha-D-ribose 1-diphosphate + adenine. The protein operates within purine metabolism; AMP biosynthesis via salvage pathway; AMP from adenine: step 1/1. Catalyzes a salvage reaction resulting in the formation of AMP, that is energically less costly than de novo synthesis. This Synechococcus sp. (strain CC9605) protein is Adenine phosphoribosyltransferase.